Consider the following 404-residue polypeptide: S-adenosylmethionine synthase (404 aa).

Positions 1-13 (MSHSRYFFTSESV) are enriched in polar residues. A disordered region spans residues 1–20 (MSHSRYFFTSESVSEGHPDK). An ATP-binding site is contributed by H17. D19 serves as a coordination point for Mg(2+). E45 contributes to the K(+) binding site. E58 and Q101 together coordinate L-methionine. The flexible loop stretch occupies residues 101–111 (QSPDINRGVDR). Residues 172–174 (DSK), 246–247 (RF), D255, 261–262 (RK), A278, and K282 contribute to the ATP site. D255 serves as a coordination point for L-methionine. Position 286 (K286) interacts with L-methionine.

It belongs to the AdoMet synthase family. In terms of assembly, homotetramer; dimer of dimers. Requires Mg(2+) as cofactor. The cofactor is K(+).

It is found in the cytoplasm. It carries out the reaction L-methionine + ATP + H2O = S-adenosyl-L-methionine + phosphate + diphosphate. It functions in the pathway amino-acid biosynthesis; S-adenosyl-L-methionine biosynthesis; S-adenosyl-L-methionine from L-methionine: step 1/1. Catalyzes the formation of S-adenosylmethionine (AdoMet) from methionine and ATP. The overall synthetic reaction is composed of two sequential steps, AdoMet formation and the subsequent tripolyphosphate hydrolysis which occurs prior to release of AdoMet from the enzyme. The polypeptide is S-adenosylmethionine synthase (Chlorobaculum parvum (strain DSM 263 / NCIMB 8327) (Chlorobium vibrioforme subsp. thiosulfatophilum)).